Consider the following 188-residue polypeptide: Elongation factor P-like protein (188 aa).

Belongs to the elongation factor P family.

The sequence is that of Elongation factor P-like protein from Xylella fastidiosa (strain M12).